A 620-amino-acid polypeptide reads, in one-letter code: Glutathione-regulated potassium-efflux system protein KefC (620 aa).

A run of 12 helical transmembrane segments spans residues 4 to 24 (HTLI…PIAV), 26 to 46 (LGLG…PWGL), 54 to 74 (SILH…GLEL), 90 to 110 (GALQ…LLGL), 114 to 134 (VAEL…MQAM), 149 to 169 (FAVL…IPLL), 178 to 198 (MGAF…VVLL), 218 to 238 (VFSA…EEVG), 270 to 290 (GLLL…GTLL), 294 to 314 (LRIV…LWLI), 327 to 347 (WFAV…GTAQ), and 359 to 379 (SLTL…VILN). The region spanning 399 to 518 (QPRVIIAGFG…AGVEKPERET (120 aa)) is the RCK N-terminal domain. Positions 597–620 (GWQGTEEGKHTGNMADEPETKPSS) are disordered.

This sequence belongs to the monovalent cation:proton antiporter 2 (CPA2) transporter (TC 2.A.37) family. KefC subfamily. As to quaternary structure, homodimer. Interacts with the regulatory subunit KefF.

The protein resides in the cell inner membrane. Pore-forming subunit of a potassium efflux system that confers protection against electrophiles. Catalyzes K(+)/H(+) antiport. The protein is Glutathione-regulated potassium-efflux system protein KefC of Shigella sonnei (strain Ss046).